Here is a 155-residue protein sequence, read N- to C-terminus: Transcriptional repressor NrdR (155 aa).

A zinc finger lies at 3 to 34 (CPFCGNVDTQVKDSRPAEDHVSIRRRRFCPAC). Residues 49–139 (LVVIKTNGKR…VYKNFQAADD (91 aa)) form the ATP-cone domain.

The protein belongs to the NrdR family. The cofactor is Zn(2+).

In terms of biological role, negatively regulates transcription of bacterial ribonucleotide reductase nrd genes and operons by binding to NrdR-boxes. This is Transcriptional repressor NrdR from Ruegeria sp. (strain TM1040) (Silicibacter sp.).